A 234-amino-acid chain; its full sequence is HTH-type transcriptional regulator ArcR (234 aa).

Val40–Asp129 contributes to the a nucleoside 3',5'-cyclic phosphate binding site. In terms of domain architecture, HTH crp-type spans Lys155–Leu228. The segment at residues Ile188 to His207 is a DNA-binding region (H-T-H motif).

It is found in the cytoplasm. Positively regulates the expression of the arcABDCR operon under anaerobic conditions, thus playing an essential role in arginine catabolism. May also control the expression of genes encoding proteins which are involved in anaerobic metabolism. Can bind cyclic AMP. This is HTH-type transcriptional regulator ArcR (arcR) from Staphylococcus aureus (strain MSSA476).